The chain runs to 97 residues: MDPKVNVVPPALHLVDPQIQMTITRMEDAVVHDQNNAGPKVYPIILRLGSQLSLSMAKRNLDSLEARAFQSTPIVVKMTKLATTEELPDEFVVVTAK.

The 90-residue stretch at 8-97 (VPPALHLVDP…PDEFVVVTAK (90 aa)) folds into the 9b domain.

Belongs to the coronavirus group 2 protein 9b family. Homodimer.

It localises to the host cytoplasmic vesicle membrane. The protein localises to the host cytoplasm. The polypeptide is Protein 9b (Rhinolophus sinicus (Chinese rufous horseshoe bat)).